The chain runs to 197 residues: Probable GTP-binding protein EngB (197 aa).

An EngB-type G domain is found at 26–197 (ELPEIALAGR…EAWDAILEKL (172 aa)). GTP is bound by residues 34 to 41 (GRSNVGKS), 61 to 65 (GKTQL), 79 to 82 (DVPG), 146 to 149 (TKAD), and 178 to 180 (FSS). Mg(2+) is bound by residues serine 41 and threonine 63.

The protein belongs to the TRAFAC class TrmE-Era-EngA-EngB-Septin-like GTPase superfamily. EngB GTPase family. The cofactor is Mg(2+).

In terms of biological role, necessary for normal cell division and for the maintenance of normal septation. The polypeptide is Probable GTP-binding protein EngB (Streptococcus pneumoniae (strain CGSP14)).